The following is a 136-amino-acid chain: General odorant-binding protein 57e (136 aa).

The N-terminal stretch at 1–20 is a signal peptide; the sequence is MLDQLTLCLLLNFLCANVLA. 3 cysteine pairs are disulfide-bonded: cysteine 28–cysteine 61, cysteine 57–cysteine 109, and cysteine 98–cysteine 118.

The protein belongs to the PBP/GOBP family.

Its function is as follows. Present in the aqueous fluid surrounding olfactory sensory dendrites and are thought to aid in the capture and transport of hydrophobic odorants into and through this fluid. This is General odorant-binding protein 57e from Drosophila melanogaster (Fruit fly).